The following is a 382-amino-acid chain: D-galactonate dehydratase (382 aa).

Aspartate 183 contacts Mg(2+). The Proton donor role is filled by histidine 185. Residues glutamate 209 and glutamate 235 each contribute to the Mg(2+) site. The Proton acceptor role is filled by histidine 285.

The protein belongs to the mandelate racemase/muconate lactonizing enzyme family. GalD subfamily. Mg(2+) is required as a cofactor.

It catalyses the reaction D-galactonate = 2-dehydro-3-deoxy-D-galactonate + H2O. It participates in carbohydrate acid metabolism; D-galactonate degradation; D-glyceraldehyde 3-phosphate and pyruvate from D-galactonate: step 1/3. In terms of biological role, catalyzes the dehydration of D-galactonate to 2-keto-3-deoxy-D-galactonate. The protein is D-galactonate dehydratase of Pectobacterium atrosepticum (strain SCRI 1043 / ATCC BAA-672) (Erwinia carotovora subsp. atroseptica).